We begin with the raw amino-acid sequence, 125 residues long: MRHRNSGVKLGRTSSHRKAMFQNLANSLFEHELIKTTLPKAKELRRVAEPLITLAKNDTVANRRLAFARTRNAATVGKLFTVLGPRYKERNGGYLRVLKAGFRAGDAAPMAYVELVDREVNTSAE.

Belongs to the bacterial ribosomal protein bL17 family. In terms of assembly, part of the 50S ribosomal subunit. Contacts protein L32.

The polypeptide is Large ribosomal subunit protein bL17 (Acinetobacter baumannii (strain AB307-0294)).